The following is a 170-amino-acid chain: NADH-quinone oxidoreductase subunit B (170 aa).

[4Fe-4S] cluster is bound by residues cysteine 37, cysteine 38, cysteine 102, and cysteine 131.

It belongs to the complex I 20 kDa subunit family. In terms of assembly, NDH-1 is composed of 14 different subunits. Subunits NuoB, C, D, E, F, and G constitute the peripheral sector of the complex. Requires [4Fe-4S] cluster as cofactor.

It is found in the cell inner membrane. The enzyme catalyses a quinone + NADH + 5 H(+)(in) = a quinol + NAD(+) + 4 H(+)(out). Functionally, NDH-1 shuttles electrons from NADH, via FMN and iron-sulfur (Fe-S) centers, to quinones in the respiratory chain. The immediate electron acceptor for the enzyme in this species is believed to be ubiquinone. Couples the redox reaction to proton translocation (for every two electrons transferred, four hydrogen ions are translocated across the cytoplasmic membrane), and thus conserves the redox energy in a proton gradient. The protein is NADH-quinone oxidoreductase subunit B of Citrifermentans bemidjiense (strain ATCC BAA-1014 / DSM 16622 / JCM 12645 / Bem) (Geobacter bemidjiensis).